The chain runs to 390 residues: Protein TAB2 homolog, chloroplastic (390 aa).

Residues 1–69 constitute a chloroplast transit peptide; that stretch reads MTTATAIVAG…RSISSESSTE (69 aa). The disordered stretch occupies residues 16–85; it reads RRSLPLPNPP…IADEEVEAEN (70 aa). Positions 61 to 75 are enriched in low complexity; the sequence is SISSESSTEASAAAD.

Its subcellular location is the plastid. The protein localises to the chloroplast. In terms of biological role, nuclear genome-encoded factor involved in the biogenesis of photosystem I (PSI). Required for the accumulation of PSI during plant development. Does not seem to be required for the translation of mRNAs of the PSI subunits. The protein is Protein TAB2 homolog, chloroplastic of Zea mays (Maize).